The sequence spans 198 residues: FMN-dependent NADH:quinone oxidoreductase (198 aa).

92-95 (MWNL) is a binding site for FMN.

This sequence belongs to the azoreductase type 1 family. As to quaternary structure, homodimer. It depends on FMN as a cofactor.

It catalyses the reaction 2 a quinone + NADH + H(+) = 2 a 1,4-benzosemiquinone + NAD(+). It carries out the reaction N,N-dimethyl-1,4-phenylenediamine + anthranilate + 2 NAD(+) = 2-(4-dimethylaminophenyl)diazenylbenzoate + 2 NADH + 2 H(+). Quinone reductase that provides resistance to thiol-specific stress caused by electrophilic quinones. In terms of biological role, also exhibits azoreductase activity. Catalyzes the reductive cleavage of the azo bond in aromatic azo compounds to the corresponding amines. The protein is FMN-dependent NADH:quinone oxidoreductase of Lachnoclostridium phytofermentans (strain ATCC 700394 / DSM 18823 / ISDg) (Clostridium phytofermentans).